The chain runs to 150 residues: D-aminoacyl-tRNA deacylase (150 aa).

Residues 136–137 carry the Gly-cisPro motif, important for rejection of L-amino acids motif; that stretch reads GP.

It belongs to the DTD family. Homodimer.

The protein resides in the cytoplasm. The enzyme catalyses glycyl-tRNA(Ala) + H2O = tRNA(Ala) + glycine + H(+). The catalysed reaction is a D-aminoacyl-tRNA + H2O = a tRNA + a D-alpha-amino acid + H(+). An aminoacyl-tRNA editing enzyme that deacylates mischarged D-aminoacyl-tRNAs. Also deacylates mischarged glycyl-tRNA(Ala), protecting cells against glycine mischarging by AlaRS. Acts via tRNA-based rather than protein-based catalysis; rejects L-amino acids rather than detecting D-amino acids in the active site. By recycling D-aminoacyl-tRNA to D-amino acids and free tRNA molecules, this enzyme counteracts the toxicity associated with the formation of D-aminoacyl-tRNA entities in vivo and helps enforce protein L-homochirality. This chain is D-aminoacyl-tRNA deacylase, found in Staphylococcus carnosus (strain TM300).